Here is a 231-residue protein sequence, read N- to C-terminus: Probable caffeoyl-CoA O-methyltransferase 2 (231 aa).

Residues threonine 53, aspartate 75, 77–78 (GV), serine 83, aspartate 101, alanine 130, aspartate 152, aspartate 154, and tyrosine 161 contribute to the S-adenosyl-L-methionine site. An a divalent metal cation-binding site is contributed by aspartate 152. Aspartate 178 and asparagine 179 together coordinate a divalent metal cation.

Belongs to the class I-like SAM-binding methyltransferase superfamily. Cation-dependent O-methyltransferase family. CCoAMT subfamily.

It catalyses the reaction (E)-caffeoyl-CoA + S-adenosyl-L-methionine = (E)-feruloyl-CoA + S-adenosyl-L-homocysteine + H(+). This chain is Probable caffeoyl-CoA O-methyltransferase 2 (omt6), found in Dictyostelium discoideum (Social amoeba).